We begin with the raw amino-acid sequence, 549 residues long: 65-kDa microtubule-associated protein 9 (549 aa).

Coiled coils occupy residues 36-123 (IEIE…ERKI), 160-199 (SLRK…CSVL), and 459-492 (GNRL…HQGQ). The tract at residues 474-549 (EEKEQERRRK…SFSTPLSRHG (76 aa)) is disordered. The segment covering 481–490 (RRKRDLKKHQ) has biased composition (basic residues). Phosphoserine is present on residues Ser-501 and Ser-546. Positions 514–549 (VSTNKRFVSSPHTPQTDSPHSAKSNQSFSTPLSRHG) are enriched in polar residues.

This sequence belongs to the MAP65/ASE1 family. In terms of assembly, forms dimer. Binds to microtubules (MT).

The protein localises to the nucleus. It localises to the cytoplasm. It is found in the cytoskeleton. The protein resides in the spindle pole. In Arabidopsis thaliana (Mouse-ear cress), this protein is 65-kDa microtubule-associated protein 9 (MAP65-9).